The sequence spans 209 residues: METSKTAAESGVSFEIIFVGRSNVGKSSLLRELFGAKVRVGKRPGVTLRPAHVQVSDLLITDMPGFGFMSGVKDRKQDIVKDKTVHYIEENAERIKLGVLVIDSPAFPQIVDRWDSKDQIPIDVEMFDFLREVGIDTIIAANKMDKVKESEYGSLLDEIAIRLGLESPWQNWKHIIAPISAKKGDIKALKGLLRDRLHEMKRDDLFKYV.

The 192-residue stretch at 12 to 203 (VSFEIIFVGR…RDRLHEMKRD (192 aa)) folds into the EngB-type G domain. Residues 20–27 (GRSNVGKS), 45–49 (GVTLR), 62–65 (DMPG), 142–145 (NKMD), and 179–181 (ISA) each bind GTP. Mg(2+) contacts are provided by Ser-27 and Thr-47.

The protein belongs to the TRAFAC class TrmE-Era-EngA-EngB-Septin-like GTPase superfamily. EngB GTPase family. Mg(2+) serves as cofactor.

Functionally, necessary for normal cell division and for the maintenance of normal septation. The sequence is that of Probable GTP-binding protein EngB from Methanosarcina barkeri (strain Fusaro / DSM 804).